Reading from the N-terminus, the 123-residue chain is Small ribosomal subunit protein uS12 (123 aa).

Asp-89 is modified (3-methylthioaspartic acid).

The protein belongs to the universal ribosomal protein uS12 family. In terms of assembly, part of the 30S ribosomal subunit. Contacts proteins S8 and S17. May interact with IF1 in the 30S initiation complex.

With S4 and S5 plays an important role in translational accuracy. Functionally, interacts with and stabilizes bases of the 16S rRNA that are involved in tRNA selection in the A site and with the mRNA backbone. Located at the interface of the 30S and 50S subunits, it traverses the body of the 30S subunit contacting proteins on the other side and probably holding the rRNA structure together. The combined cluster of proteins S8, S12 and S17 appears to hold together the shoulder and platform of the 30S subunit. The protein is Small ribosomal subunit protein uS12 of Orientia tsutsugamushi (strain Boryong) (Rickettsia tsutsugamushi).